We begin with the raw amino-acid sequence, 66 residues long: uncharacterized protein (66 aa).

The chain crosses the membrane as a helical span at residues 11-31 (PFPLLGVWIIVIIIVAVIGLL).

It localises to the membrane. This is an uncharacterized protein from Chenopodium amaranticolor (Quinoa).